We begin with the raw amino-acid sequence, 233 residues long: Large ribosomal subunit protein uL2 (233 aa).

The interval 195-233 (PHGGGNHQHVGRPSTVGRNAPPGRKVGRLSPKRRRVNGR) is disordered. Over residues 219 to 233 (KVGRLSPKRRRVNGR) the composition is skewed to basic residues.

This sequence belongs to the universal ribosomal protein uL2 family. As to quaternary structure, part of the 50S ribosomal subunit. Forms a bridge to the 30S subunit in the 70S ribosome.

Functionally, one of the primary rRNA binding proteins. Required for association of the 30S and 50S subunits to form the 70S ribosome, for tRNA binding and peptide bond formation. It has been suggested to have peptidyltransferase activity; this is somewhat controversial. Makes several contacts with the 16S rRNA in the 70S ribosome. In Thermoplasma acidophilum (strain ATCC 25905 / DSM 1728 / JCM 9062 / NBRC 15155 / AMRC-C165), this protein is Large ribosomal subunit protein uL2.